A 256-amino-acid polypeptide reads, in one-letter code: MNDIWWQTYGEGNCHLVLLHGWGLNAEVWHCIREELGSHFTLHLVDLPGYGRSSGFGAMTLEEMTAQVAKNAPDQAIWLGWSLGGLVASQMALTHPERVQALVTVASSPCFSAREGWPGIKPEILGGFQQQLSDDFQRTVERFLALQTLGTETARQDARTLKSVVLAQPMPDVEVLNGGLEILKTVDLREALKNVNMPFLRLYGYLDGLVPRKIAPLLDTLWPHSTSQIMAKAAHAPFISHPAAFCQALMTLKSSL.

The AB hydrolase-1 domain maps to 15 to 242 (HLVLLHGWGL…AAHAPFISHP (228 aa)). Substrate-binding positions include Trp-22, 82–83 (SL), and 143–147 (FLALQ). Ser-82 functions as the Nucleophile in the catalytic mechanism. Catalysis depends on residues Asp-207 and His-235. Position 235 (His-235) interacts with substrate.

The protein belongs to the AB hydrolase superfamily. Carboxylesterase BioH family. As to quaternary structure, monomer.

Its subcellular location is the cytoplasm. The enzyme catalyses 6-carboxyhexanoyl-[ACP] methyl ester + H2O = 6-carboxyhexanoyl-[ACP] + methanol + H(+). It participates in cofactor biosynthesis; biotin biosynthesis. In terms of biological role, the physiological role of BioH is to remove the methyl group introduced by BioC when the pimeloyl moiety is complete. It allows to synthesize pimeloyl-ACP via the fatty acid synthetic pathway through the hydrolysis of the ester bonds of pimeloyl-ACP esters. This is Pimeloyl-[acyl-carrier protein] methyl ester esterase from Salmonella choleraesuis (strain SC-B67).